Here is a 231-residue protein sequence, read N- to C-terminus: Biosynthetic peptidoglycan transglycosylase (231 aa).

The helical transmembrane segment at 12–34 (AAVLAGLALLLVALAVSYRWVPP) threads the bilayer.

It belongs to the glycosyltransferase 51 family.

It is found in the cell inner membrane. It catalyses the reaction [GlcNAc-(1-&gt;4)-Mur2Ac(oyl-L-Ala-gamma-D-Glu-L-Lys-D-Ala-D-Ala)](n)-di-trans,octa-cis-undecaprenyl diphosphate + beta-D-GlcNAc-(1-&gt;4)-Mur2Ac(oyl-L-Ala-gamma-D-Glu-L-Lys-D-Ala-D-Ala)-di-trans,octa-cis-undecaprenyl diphosphate = [GlcNAc-(1-&gt;4)-Mur2Ac(oyl-L-Ala-gamma-D-Glu-L-Lys-D-Ala-D-Ala)](n+1)-di-trans,octa-cis-undecaprenyl diphosphate + di-trans,octa-cis-undecaprenyl diphosphate + H(+). It functions in the pathway cell wall biogenesis; peptidoglycan biosynthesis. In terms of biological role, peptidoglycan polymerase that catalyzes glycan chain elongation from lipid-linked precursors. The sequence is that of Biosynthetic peptidoglycan transglycosylase from Rhodospirillum centenum (strain ATCC 51521 / SW).